A 447-amino-acid chain; its full sequence is Beta-glucuronosyltransferase GlcAT14A (447 aa).

The Cytoplasmic portion of the chain corresponds to 1–33 (MKKLRSYYSNVRHHQNHHHHHHHHSNIVSSERK). Residues 34-54 (WIFFPLLIGSIFALFLLFLTT) traverse the membrane as a helical; Signal-anchor for type II membrane protein segment. Residues 55 to 447 (TLTSPTGGVR…TENFRSKQCK (393 aa)) lie on the Lumenal side of the membrane. Asn151, Asn200, Asn329, and Asn405 each carry an N-linked (GlcNAc...) asparagine glycan.

This sequence belongs to the glycosyltransferase 14 family.

Its subcellular location is the golgi apparatus membrane. Its function is as follows. Beta-glucuronosyltransferase involved in the biosynthesis of type II arabinogalactan (AG). Modifies both the beta-1,6-linked galactan and beta-1,3-linked galactan present in type II AG. Transfers glucuronate to beta-1,6-galactooligosaccharides with degrees of polymerization ranging from 3 to 11. Transfers glucuronate to beta-1,3-galactooligosaccharides with degrees of polymerization ranging from 5 to 7. The addition of glucuronate at the O6 position may terminate galactose chain extension. Required for cell elongation during seedling growth. This chain is Beta-glucuronosyltransferase GlcAT14A, found in Arabidopsis thaliana (Mouse-ear cress).